The following is a 428-amino-acid chain: 2-isopropylmalate synthase 2 (428 aa).

The Pyruvate carboxyltransferase domain occupies 40–302 (PFFMDVTLRD…EVPLNFSTIY (263 aa)). Mn(2+) is bound by residues Asp-49, His-241, His-243, and Asn-277.

The protein belongs to the alpha-IPM synthase/homocitrate synthase family. LeuA type 1 subfamily. Homodimer. Mn(2+) serves as cofactor.

It is found in the cytoplasm. It carries out the reaction 3-methyl-2-oxobutanoate + acetyl-CoA + H2O = (2S)-2-isopropylmalate + CoA + H(+). The protein operates within amino-acid biosynthesis; L-leucine biosynthesis; L-leucine from 3-methyl-2-oxobutanoate: step 1/4. Functionally, catalyzes the condensation of the acetyl group of acetyl-CoA with 3-methyl-2-oxobutanoate (2-ketoisovalerate) to form 3-carboxy-3-hydroxy-4-methylpentanoate (2-isopropylmalate). Has high alpha-isopropylmalate synthase activity and low citramalate synthase activity. The polypeptide is 2-isopropylmalate synthase 2 (Leptospira interrogans serogroup Icterohaemorrhagiae serovar Lai (strain 56601)).